We begin with the raw amino-acid sequence, 481 residues long: Cysteine--tRNA ligase (481 aa).

Cys-29 contacts Zn(2+). A 'HIGH' region motif is present at residues Pro-31 to His-41. The Zn(2+) site is built by Cys-210, His-235, and Glu-239. The 'KMSKS' region signature appears at Lys-272 to Ser-276. Lys-275 contacts ATP.

This sequence belongs to the class-I aminoacyl-tRNA synthetase family. As to quaternary structure, monomer. The cofactor is Zn(2+).

It localises to the cytoplasm. It catalyses the reaction tRNA(Cys) + L-cysteine + ATP = L-cysteinyl-tRNA(Cys) + AMP + diphosphate. The protein is Cysteine--tRNA ligase of Anaeromyxobacter dehalogenans (strain 2CP-C).